The primary structure comprises 253 residues: Histone H1.4 (253 aa).

Over residues 1 to 33 (MSDVAVAADTTETPAAPTKASKATKASKATKAS) the composition is skewed to low complexity. The segment at 1 to 43 (MSDVAVAADTTETPAAPTKASKATKASKATKASKATKAKTTKV) is disordered. Position 2 is an N-acetylserine (S2). The H15 domain maps to 51–127 (AHPPFINMVT…GANGRFRLAE (77 aa)). Residues 134 to 253 (KSPAAAKKDA…KKAPAAAPEA (120 aa)) are disordered. 2 stretches are compositionally biased toward basic and acidic residues: residues 139 to 149 (AKKDATGEKKA) and 188 to 200 (AAGD…EVKV). Composition is skewed to basic residues over residues 201–210 (KKVKSPKKIA) and 234–244 (APKKAAAKPAK).

It belongs to the histone H1/H5 family.

It localises to the nucleus. The protein resides in the chromosome. Functionally, histones H1 are necessary for the condensation of nucleosome chains into higher-order structures. The protein is Histone H1.4 (hil-4) of Caenorhabditis elegans.